Here is a 489-residue protein sequence, read N- to C-terminus: N-succinylglutamate 5-semialdehyde dehydrogenase (489 aa).

223–228 (GSSRTG) contacts NAD(+). Residues glutamate 246 and cysteine 280 contribute to the active site.

This sequence belongs to the aldehyde dehydrogenase family. AstD subfamily.

The catalysed reaction is N-succinyl-L-glutamate 5-semialdehyde + NAD(+) + H2O = N-succinyl-L-glutamate + NADH + 2 H(+). The protein operates within amino-acid degradation; L-arginine degradation via AST pathway; L-glutamate and succinate from L-arginine: step 4/5. Its function is as follows. Catalyzes the NAD-dependent reduction of succinylglutamate semialdehyde into succinylglutamate. This Aeromonas salmonicida (strain A449) protein is N-succinylglutamate 5-semialdehyde dehydrogenase.